Here is a 431-residue protein sequence, read N- to C-terminus: MGQLPGAGVFCRGGCGFSRLLAWCFLLVLSPQTPGSRGAEAVWTAYLNVSWRVPHTGVNRTVWELSEEGVYGQDSPLEPVAGVLVPPDGPGALNACNPHTNFTVPTVPGDWGSSVQVSWLALIQRGGGCTFADKIHLAYERGASGAVIFNFPGTRNEVIPMSHPGAGDIVAIMIGNLKGTKILQSIQRGIQVTMVIEVGKKHGPWVNHYSIFFVSVSFFIITAATVGYFIFYSARRLRNARAQSRKQRQLKADAKKAIGRLQLRTQKQGDKEIGPDGDSCAVCIELYKPNDLVRILTCNHVFHKTCVDPWLLEHRTCPMCKCDILKALGIEVDVEDGSVSLQVPVSNETSSNASPHEEDNRSETASSGYASVQGADEPPLEEHAHSANENLQLVNHEANSMAVDVVPHVDNPTFEEDESPDQETTVREIKS.

Positions 1–38 (MGQLPGAGVFCRGGCGFSRLLAWCFLLVLSPQTPGSRG) are cleaved as a signal peptide. Asparagine 48, asparagine 59, and asparagine 101 each carry an N-linked (GlcNAc...) asparagine glycan. The region spanning 75 to 186 (SPLEPVAGVL…LKGTKILQSI (112 aa)) is the PA domain. A helical transmembrane segment spans residues 211-231 (IFFVSVSFFIITAATVGYFIF). The RING-type; atypical zinc finger occupies 280–321 (CAVCIELYKPNDLVRILTCNHVFHKTCVDPWLLEHRTCPMCK). The segment covering 345–354 (VSNETSSNAS) has biased composition (polar residues). A disordered region spans residues 345-431 (VSNETSSNAS…QETTVREIKS (87 aa)).

In terms of processing, auto-ubiquitinated. Controls the development of T-cell clonal anergy by ubiquitination.

The protein resides in the cytoplasm. The protein localises to the endomembrane system. It localises to the cytoskeleton. It is found in the perinuclear region. The enzyme catalyses S-ubiquitinyl-[E2 ubiquitin-conjugating enzyme]-L-cysteine + [acceptor protein]-L-lysine = [E2 ubiquitin-conjugating enzyme]-L-cysteine + N(6)-ubiquitinyl-[acceptor protein]-L-lysine.. It functions in the pathway protein modification; protein ubiquitination. Its function is as follows. E3 ubiquitin-protein ligase that catalyzes 'Lys-27', 'Lys-48'- or 'Lys-63'-linked polyubiquitin chains formation and plays a role in different biological processes such as modulation of immune response, cytoskeletal dynamics or protein homeostasis. Inhibits IL2 and IL4 transcription, thereby playing an important role in the induction of the anergic phenotype, a long-term stable state of T-lymphocyte unresponsiveness to antigenic stimulation associated with the blockade of interleukin production. Ubiquitinates ARPC5 with 'Lys-48' linkages and COR1A with 'Lys-63' linkages leading to their degradation, down-regulation of these cytoskeletal components results in impaired lamellipodium formation and reduced accumulation of F-actin at the immunological synapse. Functions in the patterning of the dorsal ectoderm; sensitizes ectoderm to respond to neural-inducing signals. Plays a positive role in innate immune response by promoting 'Lys-63'-linked ubiquitination of TBK1 after RNA- or DNA-virus infection. Regulates alveolar macrophage activation and neutrophil infiltration by interacting with TLR4, targeting it for degradation, and inhibiting NF-kappa-B activation, hence decreasing pro-inflammatory cytokines. Negatively regulates the IL-3/STAT5 signaling pathway by facilitating 'Lys-27'-linked polyubiquitination of IL3RA leading to its degradation via lysosomal pathway. Directly regulates the N-glycosylation process in the endoplasmic reticulum by targeting the glycosyl-transferase RPN1 for ubiquitination and degradation. Other substrates targeted for degradation by RNF128 include transmembrane proteins CD40L, CD83 or the tetraspanin CD151. This is E3 ubiquitin-protein ligase RNF128 (RNF128) from Bos taurus (Bovine).